Consider the following 258-residue polypeptide: E3 ubiquitin-protein ligase RNF170 (258 aa).

At 1–24 (MAKYQGEVQSLKLDDDSVIEGVSD) the chain is on the lumenal side. The helical transmembrane segment at 25 to 45 (QVLVAVVVSFALIATLVYALF) threads the bilayer. At 46–201 (RNVHQNIHPE…GGLFWMFRIR (156 aa)) the chain is on the cytoplasmic side. Residues 87-130 (CPICLHQASFPVETNCGHLFCGACIIAYWRYGSWLGAISCPICR) form an RING-type zinc finger. Residues 202-222 (IILCLMGAFFYLISPLDFVPE) traverse the membrane as a helical segment. A223 is a topological domain (lumenal). The chain crosses the membrane as a helical span at residues 224–244 (LFGILGFLDDFFVIFLLLIYI). Residues 245-258 (SIMYREVITQRLTR) are Cytoplasmic-facing.

As to quaternary structure, (Microbial infection) Interacts with human cytomegalovirus protein NEC2/UL50; this interaction promotes of UBA7 ubiquitination and subsequent proteasomal degradation. Constitutively associated with the ERLIN1/ERLIN 2 complex. Interacts with activated ITPR1. Expressed in the spinal cord.

The protein localises to the endoplasmic reticulum membrane. The catalysed reaction is S-ubiquitinyl-[E2 ubiquitin-conjugating enzyme]-L-cysteine + [acceptor protein]-L-lysine = [E2 ubiquitin-conjugating enzyme]-L-cysteine + N(6)-ubiquitinyl-[acceptor protein]-L-lysine.. The protein operates within protein modification; protein ubiquitination. Its function is as follows. E3 ubiquitin-protein ligase that plays an essential role in stimulus-induced inositol 1,4,5-trisphosphate receptor type 1 (ITPR1) ubiquitination and degradation via the endoplasmic reticulum-associated degradation (ERAD) pathway. Also involved in ITPR1 turnover in resting cells. Selectively inhibits the TLR3-triggered innate immune response by promoting the 'Lys-48'-linked polyubiquitination and degradation of TLR3. This is E3 ubiquitin-protein ligase RNF170 (RNF170) from Homo sapiens (Human).